A 99-amino-acid chain; its full sequence is U1-theraphotoxin-Lsp1c (99 aa).

An N-terminal signal peptide occupies residues 1 to 23 (MRKITIRALLLCSLLLVFHTSAA). Residues 24-50 (AELQAQEGHLMIPGDTDTALETVDDER) constitute a propeptide that is removed on maturation. 4 disulfides stabilise this stretch: Cys-54-Cys-67, Cys-58-Cys-91, Cys-72-Cys-74, and Cys-85-Cys-96.

Belongs to the neurotoxin 12 (Hwtx-2) family. 04 (lasiotoxin) subfamily. Expressed by the venom gland.

It is found in the secreted. In terms of biological role, toxin that causes irreversible contractile paralysis into adult Aedes aegypti resulting in 100% mortality after 24 hours. The protein is U1-theraphotoxin-Lsp1c of Lasiodora sp. (strain IBSP 8539) (Brazilian salmon pink birdeater).